The sequence spans 688 residues: Protein SDA1 homolog (688 aa).

Serine 232, serine 234, and serine 236 each carry phosphoserine. Positions 254 to 318 (KKSSKNKKKL…ERFEVKMMLM (65 aa)) form a coiled coil. Over residues 484 to 498 (VENEEENAEGDEDGW) the composition is skewed to acidic residues. The interval 484 to 524 (VENEEENAEGDEDGWESASLSDEADSDGEWVDVHHSSDEEQ) is disordered. A compositionally biased stretch (basic and acidic residues) spans 514 to 524 (VDVHHSSDEEQ). Serine 586 and serine 596 each carry phosphoserine. Residues 605–688 (KKPKSDKETR…ALLKKRKRMK (84 aa)) form a disordered region. The segment covering 668–681 (SFREKQLALRDALL) has biased composition (basic and acidic residues).

It belongs to the SDA1 family.

It is found in the nucleus. The protein localises to the nucleolus. Required for 60S pre-ribosomal subunits export to the cytoplasm. The sequence is that of Protein SDA1 homolog (SDAD1) from Bos taurus (Bovine).